The sequence spans 638 residues: LEAF RUST 10 DISEASE-RESISTANCE LOCUS RECEPTOR-LIKE PROTEIN KINASE-like 2.1 (638 aa).

Residues 1 to 29 (MINLSLYQTNSLSYTIIWMLFVIPSCVLS) form the signal peptide. The Extracellular portion of the chain corresponds to 30 to 264 (VDERQKHCSP…EHTCGKMGIG (235 aa)). N-linked (GlcNAc...) asparagine glycosylation is found at asparagine 69, asparagine 114, asparagine 136, asparagine 204, and asparagine 239. A helical transmembrane segment spans residues 265–285 (IGLGCGFLGATLITVCLLCFF). Topologically, residues 286–638 (FQKRRTSHHL…YTEVFIGSTS (353 aa)) are cytoplasmic. Positions 321-609 (KLFSHTLGKG…VLEVPPKPSI (289 aa)) constitute a Protein kinase domain. ATP contacts are provided by residues 327–335 (LGKGGFGTV) and lysine 349. Phosphotyrosine is present on tyrosine 393. Residue aspartate 444 is the Proton acceptor of the active site. At threonine 484 the chain carries Phosphothreonine.

It belongs to the protein kinase superfamily. Ser/Thr protein kinase family.

Its subcellular location is the membrane. It catalyses the reaction L-seryl-[protein] + ATP = O-phospho-L-seryl-[protein] + ADP + H(+). The catalysed reaction is L-threonyl-[protein] + ATP = O-phospho-L-threonyl-[protein] + ADP + H(+). The sequence is that of LEAF RUST 10 DISEASE-RESISTANCE LOCUS RECEPTOR-LIKE PROTEIN KINASE-like 2.1 from Arabidopsis thaliana (Mouse-ear cress).